A 414-amino-acid chain; its full sequence is Ornithine aminotransferase (414 aa).

Cys154 and Cys163 are joined by a disulfide. At Lys262 the chain carries N6-(pyridoxal phosphate)lysine.

This sequence belongs to the class-III pyridoxal-phosphate-dependent aminotransferase family. Homodimer. Pyridoxal 5'-phosphate is required as a cofactor. Post-translationally, the disulfide bond between Cys-154 and Cys-163 is reduced by TRX1 which increases OAT catalytic activity.

It localises to the cytoplasm. It catalyses the reaction a 2-oxocarboxylate + L-ornithine = L-glutamate 5-semialdehyde + an L-alpha-amino acid. The catalysed reaction is L-ornithine + 2-oxoglutarate = L-glutamate 5-semialdehyde + L-glutamate. It participates in amino-acid biosynthesis; L-proline biosynthesis; L-glutamate 5-semialdehyde from L-ornithine: step 1/1. Its activity is regulated as follows. Unlike for mammalian OATs, activity is increased by TRX1-mediated reduction of the disulfide bond between Cys-154 and Cys-163. Binding to TRX1 may also induce conformational changes that facilitate substrate binding. Catalyzes the transamination of alpha-ketoglutarate with ornithine or N-acetylornithine and of glutamate-5-semialdehyde with glutamate and alanine. The sequence is that of Ornithine aminotransferase from Plasmodium chabaudi chabaudi.